Consider the following 526-residue polypeptide: Na(+)/H(+) antiporter NhaB (526 aa).

A run of 12 helical transmembrane segments spans residues 25 to 45, 52 to 72, 89 to 109, 130 to 164, 204 to 224, 242 to 262, 307 to 327, 350 to 370, 391 to 411, 448 to 468, 479 to 499, and 505 to 525; these read ILLF…IAGW, IFTL…LLAI, LVAN…IYFM, LSLA…FYAI, LMMH…VGEP, IRMS…CVLV, IALW…LIGL, QEAL…AVII, LALF…VFVG, VATP…LAPL, MALP…EMLL, and WFYQ…LPVL.

This sequence belongs to the NhaB Na(+)/H(+) (TC 2.A.34) antiporter family.

The protein resides in the cell inner membrane. The enzyme catalyses 2 Na(+)(in) + 3 H(+)(out) = 2 Na(+)(out) + 3 H(+)(in). In terms of biological role, na(+)/H(+) antiporter that extrudes sodium in exchange for external protons. This is Na(+)/H(+) antiporter NhaB from Aeromonas hydrophila subsp. hydrophila (strain ATCC 7966 / DSM 30187 / BCRC 13018 / CCUG 14551 / JCM 1027 / KCTC 2358 / NCIMB 9240 / NCTC 8049).